Reading from the N-terminus, the 96-residue chain is Myticin-A (96 aa).

Residues 1–20 (MKATILLAVLVAVFVAGTEA) form the signal peptide. The propeptide at 61-96 (VNNPFRVNQVAKSINDLDYTPIMKSMENLDNGMDML) is removed in mature form.

In terms of processing, contains four disulfide bonds. In terms of tissue distribution, hemocytes.

It is found in the secreted. Bacteriolytic activity against Gram-positive bacteria M.luteus, B.megaterium and A.viridans. This Mytilus galloprovincialis (Mediterranean mussel) protein is Myticin-A.